Consider the following 358-residue polypeptide: MPSTTLSTVLSDINDFVVKQGHGVKGLSELGLQTLPNQYVHPPEERLSSMDVVSDDSIPVIDVSNWEDPKVAKLICDAAEKRGFFQIVNHGIPIEMLEKAKAATYRFFREPAEEKKKYSKENCPTSHVRYSTSFLPQIEKALEWKDHLSMFYVSDEEAAQYWPPSCRDDAVEYLKSCEMVSRKLLEALMQGLNVNQIDDSKESLLMGSRRININYYPKCPNPDLTVGVGRHSDISTLTLLLQDDIGGLYVRKLEHEAWSHVPPVKGALVINIGDALQIMSNGRYKSIEHRVMANESNDRISVPVFVNPRPNDIVGPLPEVLASGEKPVYKPVLYSDYAKHFYRKAHNGKDTIAFARIE.

The Fe2OG dioxygenase domain maps to 200-308 (SKESLLMGSR…RISVPVFVNP (109 aa)). Tyr216 is a 2-oxoglutarate binding site. His231, Asp233, and His289 together coordinate Fe cation. Residues Arg299 and Ser301 each contribute to the 2-oxoglutarate site.

The protein belongs to the iron/ascorbate-dependent oxidoreductase family. L-ascorbate is required as a cofactor. It depends on Fe(2+) as a cofactor. As to expression, mostly expressed in underground stems and stems.

The catalysed reaction is (E)-4-coumaroyl-CoA + 2-oxoglutarate + O2 = (E)-2,4-dihydroxycinnamoyl-CoA + succinate + CO2. It catalyses the reaction (E)-feruloyl-CoA + 2-oxoglutarate + O2 = (E)-6-hydroxyferuloyl-CoA + succinate + CO2. It participates in phenylpropanoid metabolism. Its function is as follows. 2-oxoglutarate (OG)- and Fe(II)-dependent dioxygenase (2OGD) involved in scopoletin and umbelliferone biosynthesis. Converts feruloyl CoA into 6'-hydroxyferuloyl CoA, and p-coumaroyl CoA into 2,4-dihydroxycinnamoyl-CoA, but has no activity toward caffeoyl-CoA. The polypeptide is Bi-functional coumaroyl CoA and feruloyl CoA ortho-hydroxylase F6H2-2-1 (Ipomoea batatas (Sweet potato)).